The chain runs to 402 residues: Deoxyguanosinetriphosphate triphosphohydrolase-like protein (402 aa).

An HD domain is found at Arg73–Asn217.

The protein belongs to the dGTPase family. Type 2 subfamily.

In Brucella suis (strain ATCC 23445 / NCTC 10510), this protein is Deoxyguanosinetriphosphate triphosphohydrolase-like protein.